We begin with the raw amino-acid sequence, 339 residues long: RNA 3'-terminal phosphate cyclase (339 aa).

ATP contacts are provided by residues Asp-109 and 286–290; that span reads HLADQ. The active-site Tele-AMP-histidine intermediate is the His-310.

This sequence belongs to the RNA 3'-terminal cyclase family. Type 1 subfamily.

It is found in the cytoplasm. The catalysed reaction is a 3'-end 3'-phospho-ribonucleotide-RNA + ATP = a 3'-end 2',3'-cyclophospho-ribonucleotide-RNA + AMP + diphosphate. Functionally, catalyzes the conversion of 3'-phosphate to a 2',3'-cyclic phosphodiester at the end of RNA. The mechanism of action of the enzyme occurs in 3 steps: (A) adenylation of the enzyme by ATP; (B) transfer of adenylate to an RNA-N3'P to produce RNA-N3'PP5'A; (C) and attack of the adjacent 2'-hydroxyl on the 3'-phosphorus in the diester linkage to produce the cyclic end product. The biological role of this enzyme is unknown but it is likely to function in some aspects of cellular RNA processing. The polypeptide is RNA 3'-terminal phosphate cyclase (Halobacterium salinarum (strain ATCC 29341 / DSM 671 / R1)).